Consider the following 251-residue polypeptide: D-aminoacyl-tRNA deacylase (251 aa).

It belongs to the DtdA deacylase family. As to quaternary structure, monomer. Requires Zn(2+) as cofactor.

The catalysed reaction is a D-aminoacyl-tRNA + H2O = a tRNA + a D-alpha-amino acid + H(+). It catalyses the reaction glycyl-tRNA(Ala) + H2O = tRNA(Ala) + glycine + H(+). Functionally, D-aminoacyl-tRNA deacylase with broad substrate specificity. By recycling D-aminoacyl-tRNA to D-amino acids and free tRNA molecules, this enzyme counteracts the toxicity associated with the formation of D-aminoacyl-tRNA entities in vivo. The polypeptide is D-aminoacyl-tRNA deacylase (Pyrobaculum aerophilum (strain ATCC 51768 / DSM 7523 / JCM 9630 / CIP 104966 / NBRC 100827 / IM2)).